Consider the following 659-residue polypeptide: Zeaxanthin epoxidase, chloroplastic (659 aa).

Residues 1–50 (MALLSATAPAKTRFSLFSHEEAQHPHPHALSACCGGGASGKRQRARARVA) constitute a chloroplast transit peptide. Residues 79-107 (RVLV…TVFE) and 357-370 (TFNW…LLGD) each bind FAD. The region spanning 553–607 (LSIGSRSDPSNSTASLALPLPQISENHATITCKNKAFYVTDNGSEHGTWITDNEG) is the FHA domain.

FAD is required as a cofactor. As to expression, expressed in young microspores.

It localises to the plastid. The protein localises to the chloroplast membrane. The protein resides in the chloroplast thylakoid membrane. It catalyses the reaction all-trans-zeaxanthin + 4 reduced [2Fe-2S]-[ferredoxin] + 2 O2 + 4 H(+) = all-trans-violaxanthin + 4 oxidized [2Fe-2S]-[ferredoxin] + 2 H2O. It functions in the pathway plant hormone biosynthesis; abscisate biosynthesis. In terms of biological role, zeaxanthin epoxidase that plays an important role in the xanthophyll cycle and abscisic acid (ABA) biosynthesis. Converts zeaxanthin into antheraxanthin and subsequently violaxanthin. Required for resistance to osmotic and drought stresses, seed development and dormancy. In Oryza sativa subsp. japonica (Rice), this protein is Zeaxanthin epoxidase, chloroplastic (ZEP).